A 252-amino-acid polypeptide reads, in one-letter code: Triosephosphate isomerase (252 aa).

10–12 provides a ligand contact to substrate; it reads NWK. The Electrophile role is filled by His96. The active-site Proton acceptor is the Glu168. Residues Gly174, Ser214, and 235–236 contribute to the substrate site; that span reads GG.

The protein belongs to the triosephosphate isomerase family. As to quaternary structure, homodimer.

The protein localises to the cytoplasm. The enzyme catalyses D-glyceraldehyde 3-phosphate = dihydroxyacetone phosphate. It functions in the pathway carbohydrate biosynthesis; gluconeogenesis. It participates in carbohydrate degradation; glycolysis; D-glyceraldehyde 3-phosphate from glycerone phosphate: step 1/1. Involved in the gluconeogenesis. Catalyzes stereospecifically the conversion of dihydroxyacetone phosphate (DHAP) to D-glyceraldehyde-3-phosphate (G3P). This chain is Triosephosphate isomerase, found in Streptococcus agalactiae serotype Ia (strain ATCC 27591 / A909 / CDC SS700).